A 313-amino-acid polypeptide reads, in one-letter code: UPF0252 protein AF_0384 (313 aa).

The protein belongs to the UPF0252 family.

The sequence is that of UPF0252 protein AF_0384 from Archaeoglobus fulgidus (strain ATCC 49558 / DSM 4304 / JCM 9628 / NBRC 100126 / VC-16).